A 383-amino-acid polypeptide reads, in one-letter code: WD repeat-containing protein 55 (383 aa).

Residues 1 to 11 show a composition bias toward basic and acidic residues; sequence MDRTCEERPAE. A disordered region spans residues 1–33; sequence MDRTCEERPAEDGSDEEDPDSMEAPTRIRDTPE. A compositionally biased stretch (acidic residues) spans 12–21; it reads DGSDEEDPDS. The residue at position 14 (S14) is a Phosphoserine. WD repeat units follow at residues 36-75, 82-121, 125-163, 166-205, 208-247, 250-289, and 293-332; these read VLEAPASGLAFHPARDLLAAGDVDGDVFVFSYSCQEGETK, HHLKACRAVAFSEDGQKLITVSKDKAIHVLDVEQGQLERR, AHGAPINSLLLVDENVLATGDDTGGICLWDQRKEGPLMD, QHEEYIADMALDPAKKLLLTASGDGCLGIFNIKRRRFELL, PQSGDLTSVTLMKWGKKVACGSSEGTIYLFNWNGFGATSD, ALRAESIDCMVPVTESLLCTGSTDGVIRAVNILPNRVVGS, and HTGEPVEELALSHCGRFLASSGHDQRLKFWDMAQLRAVVV. S354 carries the post-translational modification Phosphoserine. A disordered region spans residues 363 to 383; sequence REEGEDSMAQEEKEETGDDSD. Positions 365–383 are enriched in acidic residues; it reads EGEDSMAQEEKEETGDDSD. At T378 the chain carries Phosphothreonine. Phosphoserine is present on S382.

This sequence belongs to the WD repeat WDR55 family.

The protein resides in the nucleus. It localises to the nucleolus. Its subcellular location is the cytoplasm. In terms of biological role, nucleolar protein that acts as a modulator of rRNA synthesis. Plays a central role during organogenesis. In Homo sapiens (Human), this protein is WD repeat-containing protein 55 (WDR55).